A 188-amino-acid chain; its full sequence is Elongation factor P (188 aa).

Lys34 carries the post-translational modification N6-(3,6-diaminohexanoyl)-5-hydroxylysine.

It belongs to the elongation factor P family. May be beta-lysylated on the epsilon-amino group of Lys-34 by the combined action of EpmA and EpmB, and then hydroxylated on the C5 position of the same residue by EpmC (if this protein is present). Lysylation is critical for the stimulatory effect of EF-P on peptide-bond formation. The lysylation moiety may extend toward the peptidyltransferase center and stabilize the terminal 3-CCA end of the tRNA. Hydroxylation of the C5 position on Lys-34 may allow additional potential stabilizing hydrogen-bond interactions with the P-tRNA.

The protein resides in the cytoplasm. It participates in protein biosynthesis; polypeptide chain elongation. Functionally, involved in peptide bond synthesis. Alleviates ribosome stalling that occurs when 3 or more consecutive Pro residues or the sequence PPG is present in a protein, possibly by augmenting the peptidyl transferase activity of the ribosome. Modification of Lys-34 is required for alleviation. The chain is Elongation factor P from Sodalis glossinidius (strain morsitans).